A 309-amino-acid polypeptide reads, in one-letter code: 2-phospho-L-lactate transferase (309 aa).

Aspartate 50 and arginine 89 together coordinate 7,8-didemethyl-8-hydroxy-5-deazariboflavin.

This sequence belongs to the CofD family. As to quaternary structure, homodimer. Requires Mg(2+) as cofactor.

It carries out the reaction (2S)-lactyl-2-diphospho-5'-guanosine + 7,8-didemethyl-8-hydroxy-5-deazariboflavin = oxidized coenzyme F420-0 + GMP + H(+). Its pathway is cofactor biosynthesis; coenzyme F420 biosynthesis. Its function is as follows. Catalyzes the transfer of the 2-phospholactate moiety from (2S)-lactyl-2-diphospho-5'-guanosine to 7,8-didemethyl-8-hydroxy-5-deazariboflavin (FO) with the formation of oxidized coenzyme F420-0 and GMP. In Methanococcus maripaludis (strain DSM 14266 / JCM 13030 / NBRC 101832 / S2 / LL), this protein is 2-phospho-L-lactate transferase.